We begin with the raw amino-acid sequence, 302 residues long: MRTEGDSWDITTSVGSTALFVATARALEAQKSDPLVVDPYAEAFCRAVGGSWADVLDGKLPDHKLKSTDFGEHFVNFQGARTKYFDEYFRRAAAAGARQVVILAAGLDSRAYRLPWPDGTTVFELDRPQVLDFKREVLASHGAQPRALRREIAVDLRDDWPQALRDSGFDAAAPSAWIAEGLLIYLPATAQERLFTGIDALAGRRSHVAVEDGAPMGPDEYAAKVEEERAAIAEGAEEHPFFQLVYNERCAPAAEWFGERGWTAVATLLNDYLEAVGRPVPGPESEAGPMFARNTLVSAARV.

Residues Asp126 and 155 to 156 each bind S-adenosyl-L-methionine; that span reads DL.

Belongs to the UPF0677 family.

Functionally, exhibits S-adenosyl-L-methionine-dependent methyltransferase activity. This chain is Putative S-adenosyl-L-methionine-dependent methyltransferase MRA_0290, found in Mycobacterium tuberculosis (strain ATCC 25177 / H37Ra).